The chain runs to 346 residues: N-acetyl-gamma-glutamyl-phosphate reductase (346 aa).

Cysteine 149 is a catalytic residue.

The protein belongs to the NAGSA dehydrogenase family. Type 1 subfamily.

The protein resides in the cytoplasm. It catalyses the reaction N-acetyl-L-glutamate 5-semialdehyde + phosphate + NADP(+) = N-acetyl-L-glutamyl 5-phosphate + NADPH + H(+). It participates in amino-acid biosynthesis; L-arginine biosynthesis; N(2)-acetyl-L-ornithine from L-glutamate: step 3/4. In terms of biological role, catalyzes the NADPH-dependent reduction of N-acetyl-5-glutamyl phosphate to yield N-acetyl-L-glutamate 5-semialdehyde. In Micrococcus luteus (strain ATCC 4698 / DSM 20030 / JCM 1464 / CCM 169 / CCUG 5858 / IAM 1056 / NBRC 3333 / NCIMB 9278 / NCTC 2665 / VKM Ac-2230) (Micrococcus lysodeikticus), this protein is N-acetyl-gamma-glutamyl-phosphate reductase.